We begin with the raw amino-acid sequence, 472 residues long: Siroheme synthase 1 (472 aa).

Residues 1 to 203 (MDYLPLFADL…GQLTEAENEL (203 aa)) are precorrin-2 dehydrogenase /sirohydrochlorin ferrochelatase. NAD(+) is bound by residues 22 to 23 (EV) and 43 to 44 (QT). A Phosphoserine modification is found at serine 128. Residues 215-472 (GEVALVGAGP…AISPSVVNLA (258 aa)) are uroporphyrinogen-III C-methyltransferase. Proline 224 contacts S-adenosyl-L-methionine. Aspartate 247 serves as the catalytic Proton acceptor. Residue lysine 269 is the Proton donor of the active site. Residues 300–302 (GGD), isoleucine 305, 330–331 (TA), methionine 382, and glycine 411 contribute to the S-adenosyl-L-methionine site.

In the N-terminal section; belongs to the precorrin-2 dehydrogenase / sirohydrochlorin ferrochelatase family. It in the C-terminal section; belongs to the precorrin methyltransferase family.

It carries out the reaction uroporphyrinogen III + 2 S-adenosyl-L-methionine = precorrin-2 + 2 S-adenosyl-L-homocysteine + H(+). The enzyme catalyses precorrin-2 + NAD(+) = sirohydrochlorin + NADH + 2 H(+). It catalyses the reaction siroheme + 2 H(+) = sirohydrochlorin + Fe(2+). It participates in cofactor biosynthesis; adenosylcobalamin biosynthesis; precorrin-2 from uroporphyrinogen III: step 1/1. Its pathway is cofactor biosynthesis; adenosylcobalamin biosynthesis; sirohydrochlorin from precorrin-2: step 1/1. It functions in the pathway porphyrin-containing compound metabolism; siroheme biosynthesis; precorrin-2 from uroporphyrinogen III: step 1/1. The protein operates within porphyrin-containing compound metabolism; siroheme biosynthesis; siroheme from sirohydrochlorin: step 1/1. It participates in porphyrin-containing compound metabolism; siroheme biosynthesis; sirohydrochlorin from precorrin-2: step 1/1. Multifunctional enzyme that catalyzes the SAM-dependent methylations of uroporphyrinogen III at position C-2 and C-7 to form precorrin-2 via precorrin-1. Then it catalyzes the NAD-dependent ring dehydrogenation of precorrin-2 to yield sirohydrochlorin. Finally, it catalyzes the ferrochelation of sirohydrochlorin to yield siroheme. In Yersinia pseudotuberculosis serotype I (strain IP32953), this protein is Siroheme synthase 1.